The sequence spans 118 residues: Small ribosomal subunit protein uS13 (118 aa).

The segment at 94–118 (GLPVHGQRTKTNARTRKGPAKSITR) is disordered.

The protein belongs to the universal ribosomal protein uS13 family. Part of the 30S ribosomal subunit. Forms a loose heterodimer with protein S19. Forms two bridges to the 50S subunit in the 70S ribosome.

In terms of biological role, located at the top of the head of the 30S subunit, it contacts several helices of the 16S rRNA. In the 70S ribosome it contacts the 23S rRNA (bridge B1a) and protein L5 of the 50S subunit (bridge B1b), connecting the 2 subunits; these bridges are implicated in subunit movement. Contacts the tRNAs in the A and P-sites. The chain is Small ribosomal subunit protein uS13 from Acidithiobacillus ferrooxidans (strain ATCC 23270 / DSM 14882 / CIP 104768 / NCIMB 8455) (Ferrobacillus ferrooxidans (strain ATCC 23270)).